The following is a 128-amino-acid chain: Fluoride-specific ion channel FluC (128 aa).

4 helical membrane-spanning segments follow: residues 5–25, 35–55, 67–87, and 96–116; these read IVAIFVGAGFGALLRWFLSIG, LGTLASNLIGGYLIGIAVVAF, LFVITGFMGGLTTFSTYSVEV, and FGWALAVAALHLIGSFTLTGL. 2 residues coordinate Na(+): G75 and T78.

The protein belongs to the fluoride channel Fluc/FEX (TC 1.A.43) family.

It localises to the cell inner membrane. It catalyses the reaction fluoride(in) = fluoride(out). Na(+) is not transported, but it plays an essential structural role and its presence is essential for fluoride channel function. Functionally, fluoride-specific ion channel. Important for reducing fluoride concentration in the cell, thus reducing its toxicity. The sequence is that of Fluoride-specific ion channel FluC from Burkholderia mallei (strain NCTC 10247).